The chain runs to 560 residues: Solute carrier family 22 member 6 (560 aa).

Residues 1–15 (MAFSDLLEQVGSTGR) are Cytoplasmic-facing. The helical transmembrane segment at 16–36 (FQVLHVTLLSMPILMMASHNL) threads the bilayer. At 37–143 (LQNFVAAVPP…LVCDYRALKQ (107 aa)) the chain is on the extracellular side. A helical transmembrane segment spans residues 144–164 (MSQTTYMGGVLVGAIVFGGLS). Residues 165–170 (DRFGRR) are Cytoplasmic-facing. Residues 171-191 (VLLLISNLMMAIGGTCVAFST) form a helical membrane-spanning segment. Over 192–201 (SFTMFCVFRV) the chain is Extracellular. A helical transmembrane segment spans residues 202 to 222 (CCGMALSGLVLNSFSLIVEWI). The Cytoplasmic segment spans residues 223–228 (PTRVRT). Residues 229 to 249 (VVGTGTGYCYTTGQLILAAVA) traverse the membrane as a helical segment. Over 250 to 256 (YCIRDWR) the chain is Extracellular. The chain crosses the membrane as a helical span at residues 257–277 (WLTLAVSLPFYVSFLYSWWFL). Topologically, residues 278 to 345 (ESARWLVLTK…DLLRTSTMRT (68 aa)) are cytoplasmic. A helical transmembrane segment spans residues 346-366 (ITICLSAVWFSTSFAYYGLSM). At 367 to 374 (DLQKFGVS) the chain is on the extracellular side. A helical membrane pass occupies residues 375–395 (IYLIQIIFGAVDIPAKIIVTI). Topologically, residues 396–406 (CMSMLGRRPSQ) are cytoplasmic. The helical transmembrane segment at 407 to 427 (CGALVLAGIMILINLLVPSDL) threads the bilayer. Residues 428-433 (QMLRTS) are Extracellular-facing. The helical transmembrane segment at 434-454 (LAVIGKGCLAASFNCCYLYAG) threads the bilayer. At 455–465 (ELYPTVIRQSG) the chain is on the cytoplasmic side. Residues 466-486 (MGWVSMMARFGAMVAPMVLLL) traverse the membrane as a helical segment. The Extracellular portion of the chain corresponds to 487–491 (GDDYP). The helical transmembrane segment at 492-512 (WIPGFIYGGAPIVSGIFAFFL) threads the bilayer. At 513-560 (PETLSQPLPDTIQDIDDRGLARTNSKRLPEKLDLAMKDPSCVLLKESV) the chain is on the cytoplasmic side.

It belongs to the major facilitator (TC 2.A.1) superfamily. Organic cation transporter (TC 2.A.1.19) family. Post-translationally, glycosylated. Glycosylation is necessary for proper targeting of the transporter to the plasma membrane.

Its subcellular location is the cell membrane. It is found in the basolateral cell membrane. The protein localises to the basal cell membrane. Its function is as follows. Involved in the renal elimination of endogenous and exogenous organic anions. Functions as organic anion exchanger when the uptake of one molecule of organic anion is coupled with an efflux of one molecule of endogenous dicarboxylic acid (glutarate, ketoglutarate, etc). Mediates the sodium-independent uptake of p-aminohippurate (PAH), 2,3-dimercapto-1-propanesulfonic acid (DMPS), cidofovir, adefovir, 9-(2-phosphonylmethoxyethyl) guanine (PMEG), 9-(2-phosphonylmethoxyethyl) diaminopurine (PMEDAP), ochratoxin (OTA), acyclovir (ACV), 3'-azido-3-'deoxythymidine (AZT), cimetidine (CMD), 2,4-dichloro-phenoxyacetate (2,4-D), hippurate (HA), indoleacetate (IA), indoxyl sulfate (IS) and 3-carboxy-4-methyl-5-propyl-2-furanpropionate (CMPF) and edaravone sulfate. PAH uptake is inhibited by p-chloromercuribenzenesulphonate (PCMBS), diethyl pyrocarbonate (DEPC), indomethacin, sulindac, diclofenac, carprofen, okadaic acid, benzothiazolylcysteine (BTC), S-chlorotrifluoroethylcysteine (CTFC), cysteine S-conjugates S-dichlorovinylcysteine (DCVC), furosemide, steviol, phorbol 12-myristate 13-acetate (PMA), calcium ionophore A23187, benzylpenicillin, bumetamide, losartan, probenecid, phenol red, urate, glutarate and alpha-ketoglutarate. The chain is Solute carrier family 22 member 6 (slc22a6) from Danio rerio (Zebrafish).